The chain runs to 540 residues: Glucose-6-phosphate isomerase (540 aa).

Glutamate 346 serves as the catalytic Proton donor. Active-site residues include histidine 377 and lysine 505.

This sequence belongs to the GPI family.

It localises to the cytoplasm. The enzyme catalyses alpha-D-glucose 6-phosphate = beta-D-fructose 6-phosphate. The protein operates within carbohydrate biosynthesis; gluconeogenesis. Its pathway is carbohydrate degradation; glycolysis; D-glyceraldehyde 3-phosphate and glycerone phosphate from D-glucose: step 2/4. Functionally, catalyzes the reversible isomerization of glucose-6-phosphate to fructose-6-phosphate. The polypeptide is Glucose-6-phosphate isomerase (Francisella tularensis subsp. tularensis (strain SCHU S4 / Schu 4)).